Reading from the N-terminus, the 332-residue chain is NADH-quinone oxidoreductase subunit H (332 aa).

Helical transmembrane passes span 4-24, 44-64, 78-98, 120-140, 165-185, 194-214, 255-275, 279-299, and 312-332; these read FAFF…IFAS, IGPD…MIKL, FIFA…LAAI, VALL…FLGG, VGAL…LVDI, FSWL…ALFI, IAGA…FWII, IMMI…RAAF, and YLIL…AVLL.

This sequence belongs to the complex I subunit 1 family. In terms of assembly, NDH-1 is composed of 14 different subunits. Subunits NuoA, H, J, K, L, M, N constitute the membrane sector of the complex.

Its subcellular location is the cell inner membrane. It catalyses the reaction a quinone + NADH + 5 H(+)(in) = a quinol + NAD(+) + 4 H(+)(out). Its function is as follows. NDH-1 shuttles electrons from NADH, via FMN and iron-sulfur (Fe-S) centers, to quinones in the respiratory chain. The immediate electron acceptor for the enzyme in this species is believed to be ubiquinone. Couples the redox reaction to proton translocation (for every two electrons transferred, four hydrogen ions are translocated across the cytoplasmic membrane), and thus conserves the redox energy in a proton gradient. This subunit may bind ubiquinone. The sequence is that of NADH-quinone oxidoreductase subunit H from Campylobacter jejuni subsp. doylei (strain ATCC BAA-1458 / RM4099 / 269.97).